Reading from the N-terminus, the 784-residue chain is ATP-dependent 6-phosphofructokinase, platelet type (784 aa).

At Met-1 the chain carries N-acetylmethionine. The segment at 1–399 (MDADDSRAPK…NLNTYKRLAI (399 aa)) is N-terminal catalytic PFK domain 1. Ser-6, Ser-12, and Ser-21 each carry phosphoserine. Residues Gly-34, 97–98 (RC), and 127–130 (GDGS) contribute to the ATP site. Asp-128 contributes to the Mg(2+) binding site. The residue at position 142 (Ser-142) is a Phosphoserine. Residues 173–175 (SID), Arg-210, 217–219 (MGR), Glu-273, Arg-301, and 307–310 (HVQR) contribute to the substrate site. The Proton acceptor role is filled by Asp-175. The residue at position 386 (Ser-386) is a Phosphoserine. Lys-395 carries the post-translational modification N6-acetyllysine. The interval 400 to 411 (KLPDDQIPKTNC) is interdomain linker. The interval 412 to 784 (NVAVINVGAP…QLEHVQPWSV (373 aa)) is C-terminal regulatory PFK domain 2. Arg-481 serves as a coordination point for beta-D-fructose 2,6-bisphosphate. Lys-486 is modified (N6-acetyllysine). Residues 538 to 542 (TVSNN), Arg-576, 583 to 585 (MGG), and Glu-639 contribute to the beta-D-fructose 2,6-bisphosphate site. Ser-540 is a glycosylation site (O-linked (GlcNAc) serine). Position 651 is a phosphotyrosine (Tyr-651). Residues Arg-665 and 671–674 (HMQQ) contribute to the beta-D-fructose 2,6-bisphosphate site. Residue Lys-688 is modified to N6-acetyllysine. Residue Arg-744 participates in beta-D-fructose 2,6-bisphosphate binding. Position 783 is a phosphoserine (Ser-783).

Belongs to the phosphofructokinase type A (PFKA) family. ATP-dependent PFK group I subfamily. Eukaryotic two domain clade 'E' sub-subfamily. As to quaternary structure, homo- and heterotetramers. Phosphofructokinase (PFK) enzyme functions as a tetramer composed of different combinations of 3 types of subunits, called PFKM (M), PFKL (L) and PFKP (P). The composition of the PFK tetramer differs according to the tissue type it is present in. The kinetic and regulatory properties of the tetrameric enzyme are dependent on the subunit composition, hence can vary across tissues. Interacts with ATG4B; promoting phosphorylation of ATG4B. Requires Mg(2+) as cofactor. GlcNAcylation decreases enzyme activity. Post-translationally, phosphorylation at Ser-386 promotes interaction with ATG4B.

The protein resides in the cytoplasm. The catalysed reaction is beta-D-fructose 6-phosphate + ATP = beta-D-fructose 1,6-bisphosphate + ADP + H(+). Its pathway is carbohydrate degradation; glycolysis; D-glyceraldehyde 3-phosphate and glycerone phosphate from D-glucose: step 3/4. Its activity is regulated as follows. Allosterically activated by ADP, AMP, or fructose 2,6-bisphosphate, and allosterically inhibited by ATP or citrate. Catalyzes the phosphorylation of D-fructose 6-phosphate to fructose 1,6-bisphosphate by ATP, the first committing step of glycolysis. In Pongo abelii (Sumatran orangutan), this protein is ATP-dependent 6-phosphofructokinase, platelet type (PFKP).